Here is a 192-residue protein sequence, read N- to C-terminus: UPF0312 protein Spro_1887 (192 aa).

The N-terminal stretch at 1-23 (MLKKTVLGLTAGAMLLSAGSALA) is a signal peptide.

The protein belongs to the UPF0312 family. Type 1 subfamily.

Its subcellular location is the periplasm. The sequence is that of UPF0312 protein Spro_1887 from Serratia proteamaculans (strain 568).